Consider the following 626-residue polypeptide: DNA mismatch repair protein MutL (626 aa).

Belongs to the DNA mismatch repair MutL/HexB family.

Functionally, this protein is involved in the repair of mismatches in DNA. It is required for dam-dependent methyl-directed DNA mismatch repair. May act as a 'molecular matchmaker', a protein that promotes the formation of a stable complex between two or more DNA-binding proteins in an ATP-dependent manner without itself being part of a final effector complex. This chain is DNA mismatch repair protein MutL, found in Cellvibrio japonicus (strain Ueda107) (Pseudomonas fluorescens subsp. cellulosa).